The primary structure comprises 141 residues: Galactose-6-phosphate isomerase subunit LacA (141 aa).

This sequence belongs to the LacAB/RpiB family. In terms of assembly, heteromultimeric protein consisting of LacA and LacB.

The enzyme catalyses aldehydo-D-galactose 6-phosphate = keto-D-tagatose 6-phosphate. It functions in the pathway carbohydrate metabolism; D-galactose 6-phosphate degradation; D-tagatose 6-phosphate from D-galactose 6-phosphate: step 1/1. The sequence is that of Galactose-6-phosphate isomerase subunit LacA from Streptococcus pneumoniae serotype 4 (strain ATCC BAA-334 / TIGR4).